Reading from the N-terminus, the 179-residue chain is Large ribosomal subunit protein uL6 (179 aa).

It belongs to the universal ribosomal protein uL6 family. As to quaternary structure, part of the 50S ribosomal subunit.

Its function is as follows. This protein binds to the 23S rRNA, and is important in its secondary structure. It is located near the subunit interface in the base of the L7/L12 stalk, and near the tRNA binding site of the peptidyltransferase center. The polypeptide is Large ribosomal subunit protein uL6 (Streptomyces avermitilis (strain ATCC 31267 / DSM 46492 / JCM 5070 / NBRC 14893 / NCIMB 12804 / NRRL 8165 / MA-4680)).